Consider the following 188-residue polypeptide: Archaemetzincin (188 aa).

His-137 contributes to the Zn(2+) binding site. Catalysis depends on Glu-138, which acts as the Proton acceptor. His-141, His-147, Cys-148, Cys-153, Cys-172, and Cys-175 together coordinate Zn(2+).

Belongs to the peptidase M54 family. As to quaternary structure, monomer. Requires Zn(2+) as cofactor.

Functionally, probable zinc metalloprotease whose natural substrate is unknown. This is Archaemetzincin from Pyrococcus horikoshii (strain ATCC 700860 / DSM 12428 / JCM 9974 / NBRC 100139 / OT-3).